The primary structure comprises 328 residues: DNA-directed RNA polymerase subunit alpha (328 aa).

Residues Met1 to Glu232 are alpha N-terminal domain (alpha-NTD). Positions Ile248–Pro328 are alpha C-terminal domain (alpha-CTD).

The protein belongs to the RNA polymerase alpha chain family. As to quaternary structure, homodimer. The RNAP catalytic core consists of 2 alpha, 1 beta, 1 beta' and 1 omega subunit. When a sigma factor is associated with the core the holoenzyme is formed, which can initiate transcription.

The enzyme catalyses RNA(n) + a ribonucleoside 5'-triphosphate = RNA(n+1) + diphosphate. Its function is as follows. DNA-dependent RNA polymerase catalyzes the transcription of DNA into RNA using the four ribonucleoside triphosphates as substrates. This chain is DNA-directed RNA polymerase subunit alpha, found in Bordetella avium (strain 197N).